A 368-amino-acid chain; its full sequence is Transcription factor TGA7 (368 aa).

Positions 70-82 (HNQIEAEQPSSND) are enriched in polar residues. The tract at residues 70-89 (HNQIEAEQPSSNDNQDDDGR) is disordered. The 61-residue stretch at 91 to 151 (HDKMKRRLAQ…LGPSGSINTG (61 aa)) folds into the bZIP domain. Coiled coils occupy residues 92-142 (DKMK…QGHL) and 252-285 (DQQI…SLAE). The basic motif stretch occupies residues 93-113 (KMKRRLAQNREAARKSRLRKK). The leucine-zipper stretch occupies residues 119-133 (LEESRLKLSQLEQEL). A DOG1 domain is found at 152–363 (IASFEMEYSH…RALSSLWAAR (212 aa)).

Belongs to the bZIP family. As to quaternary structure, binds DNA as a dimer. Interacts with NPR1 and NPR4. Interacts with GRXC7/ROXY1.

The protein localises to the nucleus. Transcriptional activator that binds specifically to the DNA sequence 5'-TGACG-3'. Recognizes ocs elements like the as-1 motif of the cauliflower mosaic virus 35S promoter. Binding to the as-1-like cis elements mediate auxin- and salicylic acid-inducible transcription. May be involved in the induction of the systemic acquired resistance (SAR) via its interaction with NPR1. In Arabidopsis thaliana (Mouse-ear cress), this protein is Transcription factor TGA7 (TGA7).